We begin with the raw amino-acid sequence, 202 residues long: Holliday junction branch migration complex subunit RuvA (202 aa).

The interval 1 to 63 is domain I; it reads MIASLRGTVL…EDSMTLYGFT (63 aa). Residues 64 to 142 form a domain II region; the sequence is SQDDRDMFHV…AFAPAESADL (79 aa). The interval 143–148 is flexible linker; sequence SSAAPA. Positions 149–202 are domain III; it reads AAGPVVEDVVEALIGLGFTDKMARPVVESVVAEQPDAATPVVLRAALSQLGAKK.

It belongs to the RuvA family. As to quaternary structure, homotetramer. Forms an RuvA(8)-RuvB(12)-Holliday junction (HJ) complex. HJ DNA is sandwiched between 2 RuvA tetramers; dsDNA enters through RuvA and exits via RuvB. An RuvB hexamer assembles on each DNA strand where it exits the tetramer. Each RuvB hexamer is contacted by two RuvA subunits (via domain III) on 2 adjacent RuvB subunits; this complex drives branch migration. In the full resolvosome a probable DNA-RuvA(4)-RuvB(12)-RuvC(2) complex forms which resolves the HJ.

It is found in the cytoplasm. Its function is as follows. The RuvA-RuvB-RuvC complex processes Holliday junction (HJ) DNA during genetic recombination and DNA repair, while the RuvA-RuvB complex plays an important role in the rescue of blocked DNA replication forks via replication fork reversal (RFR). RuvA specifically binds to HJ cruciform DNA, conferring on it an open structure. The RuvB hexamer acts as an ATP-dependent pump, pulling dsDNA into and through the RuvAB complex. HJ branch migration allows RuvC to scan DNA until it finds its consensus sequence, where it cleaves and resolves the cruciform DNA. In Corynebacterium aurimucosum (strain ATCC 700975 / DSM 44827 / CIP 107346 / CN-1) (Corynebacterium nigricans), this protein is Holliday junction branch migration complex subunit RuvA.